The sequence spans 305 residues: Coenzyme PQQ synthesis protein B (305 aa).

It belongs to the PqqB family.

It participates in cofactor biosynthesis; pyrroloquinoline quinone biosynthesis. Functionally, may be involved in the transport of PQQ or its precursor to the periplasm. The chain is Coenzyme PQQ synthesis protein B from Cupriavidus taiwanensis (strain DSM 17343 / BCRC 17206 / CCUG 44338 / CIP 107171 / LMG 19424 / R1) (Ralstonia taiwanensis (strain LMG 19424)).